The primary structure comprises 912 residues: MATSQTSQTVAAHVPFADLCSTLERIQKSKERAEKIRHFKEFLDSWRKFHDALHKNKKDVTDSFYPAMRLILPQLERERMAYGIKETMLAKLYIELLNLPREGKDALKLLNYRTPSGARTDAGDFAVIAYFVLKPRCLQKGSLTIQQVNELLDLVASNNSGKRKDLVKKSLLQLITQSSALEQKWLIRMIIKDLKLGVSQQTILNIFHNDAVELHNVTTDLEKVCRQLHDPAVGLSDISITLFSAFKPMLAAVADVERVEKDMKQQSFYIETKLDGERMQMHKDGSVYQYFSRNGYNYTDQFGASPQEGTLTPFIHDAFRTDVQVCILDGEMMAYNPTTQTFMQKGVKFDIKRMVEDSDLQTCYCVFDVLMVNNKKLGRETLRKRYDILNSTFTPIQGRIEIVQKKLAQTKNEVVDALNEAIDKREEGIMIKHPLSIYKPDKRGEGWLKIKPEYVSGLMDELDLLIVGGYWGKGSRGGMMSHFLCAVAEKPPHGEKPSVFHTLCRVGSGYTMKELYDLGLKLAKYWKPFHKKSPPSSILCGTEKPEVYIEPCNSVIVQIKAAEIVPSDMYKTGTTLRFPRIEKIRDDKEWHECMTLGDLEELRGKASGKLATKHLHVGDDDEPREKRRKPVSKMKKTIGIIEHLKAPNLSNISKVSNVFEDVEFCVMSGLDGYPKSDLENRIAEFGGYIVQNPGPDTYCVIAGCENIRVKNIISSDQHDVVKPEWLLECFKTKTCVPWQPRFMIHMCPSTKQHFAREYDCYGDSYFVDTDLDQLKEVFLGIKKAGEHQTPEEMAPVIADLEYRYSWDHSPLCMFRHCTVYLDLYAVINDSSSKIKATRLDVTALELRFHGAKVVSHLSEGVSHVIIGENQSRVSDFKVFRRTLKKKFKILQERWVTDSVDKGELQEENQYLL.

Residues glutamate 271, threonine 272, lysine 273, leucine 274, arginine 278, glutamate 331, lysine 345, phenylalanine 367, glutamate 427, lysine 432, lysine 449, and lysine 451 each contribute to the ATP site. Lysine 273 serves as the catalytic N6-AMP-lysine intermediate. Glutamate 331 is a Mg(2+) binding site. Glutamate 427 contributes to the Mg(2+) binding site. The tract at residues 610–620 (LATKHLHVGDD) is required for catalytic activity. BRCT domains are found at residues 654-743 (KVSN…PRFM) and 846-912 (LRFH…QYLL).

It belongs to the ATP-dependent DNA ligase family. Interacts with XRCC4; the LIG4-XRCC4 subcomplex has a 1:2 stoichiometry and XRCC4 is required for LIG4 stability. Component of the core long-range non-homologous end joining (NHEJ) complex (also named DNA-PK complex) composed of PRKDC, LIG4, XRCC4, XRCC6/Ku70, XRCC5/Ku86 and NHEJ1/XLF. Additional component of the NHEJ complex includes PAXX. Following autophosphorylation, PRKDC dissociates from DNA, leading to formation of the short-range NHEJ complex, composed of LIG4, XRCC4, XRCC6/Ku70, XRCC5/Ku86 and NHEJ1/XLF. Interacts with DCLRE1C; the interaction is direct. Interacts with APLF. Mg(2+) serves as cofactor.

It localises to the nucleus. It carries out the reaction ATP + (deoxyribonucleotide)n-3'-hydroxyl + 5'-phospho-(deoxyribonucleotide)m = (deoxyribonucleotide)n+m + AMP + diphosphate.. Functionally, DNA ligase involved in DNA non-homologous end joining (NHEJ); required for double-strand break (DSB) repair and V(D)J recombination. Catalyzes the NHEJ ligation step of the broken DNA during DSB repair by resealing the DNA breaks after the gap filling is completed. Joins single-strand breaks in a double-stranded polydeoxynucleotide in an ATP-dependent reaction. LIG4 is mechanistically flexible: it can ligate nicks as well as compatible DNA overhangs alone, while in the presence of XRCC4, it can ligate ends with 2-nucleotides (nt) microhomology and 1-nt gaps. Forms a subcomplex with XRCC4; the LIG4-XRCC4 subcomplex is responsible for the NHEJ ligation step and XRCC4 enhances the joining activity of LIG4. Binding of the LIG4-XRCC4 complex to DNA ends is dependent on the assembly of the DNA-dependent protein kinase complex DNA-PK to these DNA ends. LIG4 regulates nuclear localization of XRCC4. In Cricetulus griseus (Chinese hamster), this protein is DNA ligase 4.